The sequence spans 94 residues: MKILAVVLISVIVLNTANGENYYPQKYTNDYYGCQKQTDAFCDKVCKLHLADSGFCDQSWGLAKACKCVNVSYDNSFFFNALESQCPLLNKSAA.

A signal peptide spans 1–19 (MKILAVVLISVIVLNTANG). In terms of domain architecture, LCN-type CS-alpha/beta spans 20-87 (ENYYPQKYTN…FFNALESQCP (68 aa)). 3 disulfides stabilise this stretch: Cys34-Cys56, Cys42-Cys66, and Cys46-Cys68.

It belongs to the long (3 C-C) scorpion toxin superfamily. As to quaternary structure, homodimer; disulfide-linked or monomer (edited version) or heterodimer of an alpha chain (AC D9U299 or AC D9U2A4) and this beta chain (non-edited version). Expressed by the venom gland.

It localises to the secreted. In terms of biological role, the homodimer inhibits HMG-CoA reductase (HMGCR) (32% of inhibition produced by 0.6 uM), a glycoprotein involved in the control of cholesterol biosynthesis. The inhibitory effects of bumarsin are seen at much lower concentrations (0.6 uM) than that for statins such as atorvastatin (5 mM) and simvastatin (10 uM). In addition to inhibition of HMG-CoA reductase, this protein lowers cholesterol levels by inducing steroid hormone synthesis via StAR, and by increasing reverse cholesterol transport mediated by the induction of ABCA1 and APOA1. Its function is as follows. The heterodimer non-edited LVP1 induces lipolysis in rat adipocytes. Induction of lipolysis by LVP1 appears to be mediated through the beta-2 adrenergic receptor pathway (ADRB2). The monomer edited version, similar to alpha-toxins, may modulate voltage-gated sodium channels (Nav) and may block voltage-gated potassium channels (Kv). This is Lipolysis-activating peptide 1-beta chain from Lychas mucronatus (Chinese swimming scorpion).